The primary structure comprises 133 residues: Small ribosomal subunit protein uS8 (133 aa).

It belongs to the universal ribosomal protein uS8 family. Part of the 30S ribosomal subunit.

One of the primary rRNA binding proteins, it binds directly to 16S rRNA central domain where it helps coordinate assembly of the platform of the 30S subunit. The protein is Small ribosomal subunit protein uS8 of Hyperthermus butylicus (strain DSM 5456 / JCM 9403 / PLM1-5).